The primary structure comprises 271 residues: Formamidopyrimidine-DNA glycosylase (271 aa).

Residue Pro2 is the Schiff-base intermediate with DNA of the active site. Catalysis depends on Glu3, which acts as the Proton donor. The Proton donor; for beta-elimination activity role is filled by Lys58. His92, Arg111, and Arg152 together coordinate DNA. An FPG-type zinc finger spans residues 237-271; sequence FVYGREGEACKQCGRVLKHATIGQRATVWCGSCQR. Arg261 (proton donor; for delta-elimination activity) is an active-site residue.

Belongs to the FPG family. In terms of assembly, monomer. The cofactor is Zn(2+).

It catalyses the reaction Hydrolysis of DNA containing ring-opened 7-methylguanine residues, releasing 2,6-diamino-4-hydroxy-5-(N-methyl)formamidopyrimidine.. The enzyme catalyses 2'-deoxyribonucleotide-(2'-deoxyribose 5'-phosphate)-2'-deoxyribonucleotide-DNA = a 3'-end 2'-deoxyribonucleotide-(2,3-dehydro-2,3-deoxyribose 5'-phosphate)-DNA + a 5'-end 5'-phospho-2'-deoxyribonucleoside-DNA + H(+). Its function is as follows. Involved in base excision repair of DNA damaged by oxidation or by mutagenic agents. Acts as a DNA glycosylase that recognizes and removes damaged bases. Has a preference for oxidized purines, such as 7,8-dihydro-8-oxoguanine (8-oxoG). Has AP (apurinic/apyrimidinic) lyase activity and introduces nicks in the DNA strand. Cleaves the DNA backbone by beta-delta elimination to generate a single-strand break at the site of the removed base with both 3'- and 5'-phosphates. The polypeptide is Formamidopyrimidine-DNA glycosylase (Xanthomonas axonopodis pv. citri (strain 306)).